Here is a 131-residue protein sequence, read N- to C-terminus: Small ribosomal subunit protein uS11 (131 aa).

This sequence belongs to the universal ribosomal protein uS11 family. As to quaternary structure, part of the 30S ribosomal subunit. Interacts with proteins S7 and S18. Binds to IF-3.

Its function is as follows. Located on the platform of the 30S subunit, it bridges several disparate RNA helices of the 16S rRNA. Forms part of the Shine-Dalgarno cleft in the 70S ribosome. The protein is Small ribosomal subunit protein uS11 of Deinococcus deserti (strain DSM 17065 / CIP 109153 / LMG 22923 / VCD115).